Reading from the N-terminus, the 319-residue chain is Ferrochelatase (319 aa).

2 residues coordinate Fe cation: His194 and Glu275.

It belongs to the ferrochelatase family.

It is found in the cytoplasm. The catalysed reaction is heme b + 2 H(+) = protoporphyrin IX + Fe(2+). Its pathway is porphyrin-containing compound metabolism; protoheme biosynthesis; protoheme from protoporphyrin-IX: step 1/1. Catalyzes the ferrous insertion into protoporphyrin IX. This is Ferrochelatase from Vibrio vulnificus (strain CMCP6).